Consider the following 129-residue polypeptide: MNNFSYFSTIFSIALMSSNAFAGNDTLLVGFCPCIEINTLTLFLSSLYAIKPSDSCSPSYTSNLLNLFCDFVNSSTHLSISVFSSSVLSCFTSCFVIYFYPFFVFDSASYCVFNSSSREGCTSVTIGWG.

3 helical membrane-spanning segments follow: residues 3-23 (NFSY…AFAG), 27-47 (LLVG…LSSL), and 85-105 (SSVL…FFVF).

It is found in the host membrane. In Sulfolobus islandicus filamentous virus (isolate Iceland/Hveragerdi) (SIFV), this protein is Putative transmembrane protein 10 (SIFV0010).